The following is a 646-amino-acid chain: Glutamine--tRNA ligase protein virJ (646 aa).

Positions 25 to 65 (NELKKRIQKRARKAAAAANRSNAQQEKGNKPAANKPAAKPE) are disordered. Residues 38–61 (AAAAANRSNAQQEKGNKPAANKPA) show a composition bias toward low complexity. Positions 98–108 (PEPNGYLHLGH) match the 'HIGH' region motif. ATP contacts are provided by residues 99–101 (EPN) and 105–111 (HLGHAKA). L-glutamine-binding residues include D147 and Y296. Residues T315, 344–345 (RL), and 352–354 (MSK) contribute to the ATP site. Positions 351–355 (IMSKR) match the 'KMSKS' region motif.

It belongs to the class-I aminoacyl-tRNA synthetase family.

It carries out the reaction tRNA(Gln) + L-glutamine + ATP = L-glutaminyl-tRNA(Gln) + AMP + diphosphate. In terms of biological role, glutamine--tRNA ligase; part of the gene cluster that mediates the biosynthesis of virensols and trichoxide, fungal natural products that contain or are derived from a salicylaldehyde core. VirJ does not seem to play any role in virensols and trichoxide biosynthesis. The protein is Glutamine--tRNA ligase protein virJ of Hypocrea virens (strain Gv29-8 / FGSC 10586) (Gliocladium virens).